Reading from the N-terminus, the 637-residue chain is tRNA uridine 5-carboxymethylaminomethyl modification enzyme MnmG (637 aa).

FAD-binding positions include 15 to 20, valine 127, and serine 182; that span reads GAGHAG. 274 to 288 contacts NAD(+); that stretch reads GPRYCPSIEDKVVRF. Glutamine 371 is a binding site for FAD.

Belongs to the MnmG family. In terms of assembly, homodimer. Heterotetramer of two MnmE and two MnmG subunits. It depends on FAD as a cofactor.

The protein resides in the cytoplasm. Functionally, NAD-binding protein involved in the addition of a carboxymethylaminomethyl (cmnm) group at the wobble position (U34) of certain tRNAs, forming tRNA-cmnm(5)s(2)U34. The chain is tRNA uridine 5-carboxymethylaminomethyl modification enzyme MnmG from Heliobacterium modesticaldum (strain ATCC 51547 / Ice1).